The sequence spans 45 residues: uncharacterized protein (45 aa).

Residues 1 to 26 (MIMGKDRQEKKLKASGRVESDRDQSI) show a composition bias toward basic and acidic residues. The segment at 1 to 45 (MIMGKDRQEKKLKASGRVESDRDQSIHYDGATSLEQNGRFKKRKS) is disordered.

This is an uncharacterized protein from Bacillus subtilis (strain 168).